A 92-amino-acid chain; its full sequence is Small ribosomal subunit protein uS19 (92 aa).

It belongs to the universal ribosomal protein uS19 family.

In terms of biological role, protein S19 forms a complex with S13 that binds strongly to the 16S ribosomal RNA. This is Small ribosomal subunit protein uS19 from Brucella ovis (strain ATCC 25840 / 63/290 / NCTC 10512).